The following is a 458-amino-acid chain: uncharacterized protein (458 aa).

Disordered stretches follow at residues 339–397 and 434–458; these read GTGY…ARIL and YNSEDEDFEYDSDSEDDDSDSEDDC. 2 stretches are compositionally biased toward acidic residues: residues 344 to 390 and 436 to 458; these read SDSD…EEEP and SEDEDFEYDSDSEDDDSDSEDDC.

This is an uncharacterized protein from Invertebrate iridescent virus 3 (IIV-3).